Here is a 297-residue protein sequence, read N- to C-terminus: Probable endonuclease 4 (297 aa).

Zn(2+)-binding residues include H69, H110, E145, D179, H182, H214, D227, H229, and E259.

Belongs to the AP endonuclease 2 family. The cofactor is Zn(2+).

It catalyses the reaction Endonucleolytic cleavage to 5'-phosphooligonucleotide end-products.. Its function is as follows. Endonuclease IV plays a role in DNA repair. It cleaves phosphodiester bonds at apurinic or apyrimidinic (AP) sites, generating a 3'-hydroxyl group and a 5'-terminal sugar phosphate. This is Probable endonuclease 4 from Listeria innocua serovar 6a (strain ATCC BAA-680 / CLIP 11262).